A 273-amino-acid polypeptide reads, in one-letter code: Large ribosomal subunit protein uL2 (273 aa).

Disordered regions lie at residues 34–54 (LEKK…TRHI) and 223–273 (VAMN…RRRK).

The protein belongs to the universal ribosomal protein uL2 family. As to quaternary structure, part of the 50S ribosomal subunit. Forms a bridge to the 30S subunit in the 70S ribosome.

One of the primary rRNA binding proteins. Required for association of the 30S and 50S subunits to form the 70S ribosome, for tRNA binding and peptide bond formation. It has been suggested to have peptidyltransferase activity; this is somewhat controversial. Makes several contacts with the 16S rRNA in the 70S ribosome. This chain is Large ribosomal subunit protein uL2, found in Azotobacter vinelandii (strain DJ / ATCC BAA-1303).